The following is a 459-amino-acid chain: Protein phosphatase 1M (459 aa).

The segment covering 1-10 has biased composition (basic residues); the sequence is MSAGWFRRRF. The segment at 1–64 is disordered; the sequence is MSAGWFRRRF…SRPVRSPARG (64 aa). Positions 14-27 are enriched in pro residues; the sequence is EPLPAPRPPGPHAS. Positions 38-48 are enriched in low complexity; that stretch reads RGSSSSPGAAD. Residues aspartate 125 and glycine 126 each contribute to the Mn(2+) site. Residues 162 to 459 enclose the PPM-type phosphatase domain; sequence MHLNGRCICP…HSQGQESSDH (298 aa).

The protein belongs to the PP2C family. Mg(2+) serves as cofactor. The cofactor is Mn(2+).

It is found in the nucleus. It catalyses the reaction O-phospho-L-seryl-[protein] + H2O = L-seryl-[protein] + phosphate. It carries out the reaction O-phospho-L-threonyl-[protein] + H2O = L-threonyl-[protein] + phosphate. This Homo sapiens (Human) protein is Protein phosphatase 1M (PPM1M).